The chain runs to 477 residues: Asparaginyl-tRNA synthetase (477 aa).

The transit peptide at 1–14 (MLGARRLLGALRLC) directs the protein to the mitochondrion. Position 353 is an N6-acetyllysine (Lys353).

This sequence belongs to the class-II aminoacyl-tRNA synthetase family. In terms of assembly, homodimer. Expressed in brain and inner ear, including the cochlear epithelium and organ of Corti.

It localises to the mitochondrion matrix. The protein localises to the mitochondrion. It catalyses the reaction tRNA(Asn) + L-asparagine + ATP = L-asparaginyl-tRNA(Asn) + AMP + diphosphate + H(+). Functionally, mitochondrial aminoacyl-tRNA synthetase that catalyzes the specific attachment of the asparagine amino acid (aa) to the homologous transfer RNA (tRNA), further participating in protein synthesis. The reaction occurs in a two steps: asparagine is first activated by ATP to form Asn-AMP and then transferred to the acceptor end of tRNA(Asn). This Mus musculus (Mouse) protein is Asparaginyl-tRNA synthetase.